The primary structure comprises 143 residues: Putative pre-16S rRNA nuclease (143 aa).

This sequence belongs to the YqgF nuclease family.

It is found in the cytoplasm. Could be a nuclease involved in processing of the 5'-end of pre-16S rRNA. This is Putative pre-16S rRNA nuclease from Leuconostoc mesenteroides subsp. mesenteroides (strain ATCC 8293 / DSM 20343 / BCRC 11652 / CCM 1803 / JCM 6124 / NCDO 523 / NBRC 100496 / NCIMB 8023 / NCTC 12954 / NRRL B-1118 / 37Y).